The chain runs to 359 residues: Beta-hexosaminidase (359 aa).

Substrate contacts are provided by residues Asp-64, Arg-72, Arg-138, and 168-169 (KH). His-181 serves as the catalytic Proton donor/acceptor. Residue Asp-252 is the Nucleophile of the active site.

The protein belongs to the glycosyl hydrolase 3 family. NagZ subfamily.

The protein localises to the cytoplasm. The catalysed reaction is Hydrolysis of terminal non-reducing N-acetyl-D-hexosamine residues in N-acetyl-beta-D-hexosaminides.. Its pathway is cell wall biogenesis; peptidoglycan recycling. Functionally, plays a role in peptidoglycan recycling by cleaving the terminal beta-1,4-linked N-acetylglucosamine (GlcNAc) from peptide-linked peptidoglycan fragments, giving rise to free GlcNAc, anhydro-N-acetylmuramic acid and anhydro-N-acetylmuramic acid-linked peptides. This Thiobacillus denitrificans (strain ATCC 25259 / T1) protein is Beta-hexosaminidase.